We begin with the raw amino-acid sequence, 141 residues long: Putative pre-16S rRNA nuclease (141 aa).

The protein belongs to the YqgF nuclease family.

The protein localises to the cytoplasm. Its function is as follows. Could be a nuclease involved in processing of the 5'-end of pre-16S rRNA. In Pseudomonas putida (strain ATCC 47054 / DSM 6125 / CFBP 8728 / NCIMB 11950 / KT2440), this protein is Putative pre-16S rRNA nuclease.